Here is a 175-residue protein sequence, read N- to C-terminus: uncharacterized protein (175 aa).

Polar residues predominate over residues 1-14 (MNTSSRIQLPSSND). Disordered stretches follow at residues 1-31 (MNTSSRIQLPSSNDAHVYDGRSNEPKASKRS) and 127-175 (ARSR…QSKR). A compositionally biased stretch (basic and acidic residues) spans 16-27 (HVYDGRSNEPKA). Low complexity predominate over residues 130-149 (RASSVSNSRLNSRTNSSVSL). Over residues 154-175 (GSSSWKNKIKNAVSNVTDQSKR) the composition is skewed to polar residues.

It is found in the cytoplasm. The protein resides in the nucleus. This is an uncharacterized protein from Schizosaccharomyces pombe (strain 972 / ATCC 24843) (Fission yeast).